The primary structure comprises 134 residues: Complexin-1 (134 aa).

Positions 1–112 (MEFVMKQALG…PGCGDAAEEE (112 aa)) are disordered. Basic and acidic residues predominate over residues 15-81 (DMGKMLGGDE…IKKKEEREAE (67 aa)). A coiled-coil region spans residues 29–69 (DAAKKEEERQEALRQEEEERKAKYAKMEAEREAVRQGIRDK). The interval 48–70 (RKAKYAKMEAEREAVRQGIRDKY) is interaction with the SNARE complex.

Belongs to the complexin/synaphin family. As to quaternary structure, binds to the SNARE core complex containing SNAP25, VAMP2 and STX1A.

The protein resides in the cytoplasm. The protein localises to the cytosol. It localises to the perikaryon. Its subcellular location is the presynapse. Positively regulates a late step in synaptic vesicle exocytosis. Organizes the SNAREs into a cross-linked zigzag topology that, when interposed between the vesicle and plasma membranes, is incompatible with fusion, thereby preventing SNAREs from releasing neurotransmitters until an action potential arrives at the synapse. Also involved in glucose-induced secretion of insulin by pancreatic beta-cells. This Bos taurus (Bovine) protein is Complexin-1 (CPLX1).